A 67-amino-acid polypeptide reads, in one-letter code: Conotoxin Cal12.1p2 (67 aa).

A propeptide spanning residues 1 to 21 is cleaved from the precursor; the sequence is DLITNSYTRGKPRHVTSWRNL.

Contains 4 disulfide bonds. In terms of tissue distribution, expressed by the venom duct.

The protein localises to the secreted. This chain is Conotoxin Cal12.1p2, found in Californiconus californicus (California cone).